Consider the following 195-residue polypeptide: HTH-type transcriptional regulator BetI (195 aa).

Residues 8 to 68 enclose the HTH tetR-type domain; sequence SIRRRQLIDA…ATMRDITSQL (61 aa). The H-T-H motif DNA-binding region spans 31–50; that stretch reads TIAQIARRAGVSTGIISHYF.

The protein operates within amine and polyamine biosynthesis; betaine biosynthesis via choline pathway [regulation]. Repressor involved in the biosynthesis of the osmoprotectant glycine betaine. It represses transcription of the choline transporter BetT and the genes of BetAB involved in the synthesis of glycine betaine. The sequence is that of HTH-type transcriptional regulator BetI from Escherichia coli O8 (strain IAI1).